We begin with the raw amino-acid sequence, 350 residues long: Ion-translocating oxidoreductase complex subunit D (350 aa).

Helical transmembrane passes span 20–39 (IMML…WYFF), 89–109 (IPPL…VIIA), and 123–143 (PAMI…TNWL). Threonine 187 is subject to FMN phosphoryl threonine. 5 helical membrane passes run 215 to 235 (LAGL…LFLL), 244 to 264 (IPVS…LIAP), 267 to 287 (FLSP…FFIL), 301 to 321 (LVFG…GGYP), and 322 to 342 (DGVA…DYYT).

It belongs to the NqrB/RnfD family. In terms of assembly, the complex is composed of six subunits: RnfA, RnfB, RnfC, RnfD, RnfE and RnfG. Requires FMN as cofactor.

The protein resides in the cell inner membrane. Part of a membrane-bound complex that couples electron transfer with translocation of ions across the membrane. This is Ion-translocating oxidoreductase complex subunit D from Cronobacter sakazakii (strain ATCC BAA-894) (Enterobacter sakazakii).